Consider the following 105-residue polypeptide: Pyrimidine/purine nucleoside phosphorylase (105 aa).

It belongs to the nucleoside phosphorylase PpnP family.

The catalysed reaction is a purine D-ribonucleoside + phosphate = a purine nucleobase + alpha-D-ribose 1-phosphate. It catalyses the reaction adenosine + phosphate = alpha-D-ribose 1-phosphate + adenine. It carries out the reaction cytidine + phosphate = cytosine + alpha-D-ribose 1-phosphate. The enzyme catalyses guanosine + phosphate = alpha-D-ribose 1-phosphate + guanine. The catalysed reaction is inosine + phosphate = alpha-D-ribose 1-phosphate + hypoxanthine. It catalyses the reaction thymidine + phosphate = 2-deoxy-alpha-D-ribose 1-phosphate + thymine. It carries out the reaction uridine + phosphate = alpha-D-ribose 1-phosphate + uracil. The enzyme catalyses xanthosine + phosphate = alpha-D-ribose 1-phosphate + xanthine. Its function is as follows. Catalyzes the phosphorolysis of diverse nucleosides, yielding D-ribose 1-phosphate and the respective free bases. Can use uridine, adenosine, guanosine, cytidine, thymidine, inosine and xanthosine as substrates. Also catalyzes the reverse reactions. This chain is Pyrimidine/purine nucleoside phosphorylase, found in Clostridioides difficile (strain 630) (Peptoclostridium difficile).